A 594-amino-acid polypeptide reads, in one-letter code: UvrABC system protein C (594 aa).

In terms of domain architecture, GIY-YIG spans 14–91; the sequence is DSPGCYLHKD…IQENMPKYNI (78 aa). In terms of domain architecture, UVR spans 196–231; the sequence is DKIIDDLRSKMLEASNKQEFERAAEYRDLISGIATM.

Belongs to the UvrC family. Interacts with UvrB in an incision complex.

The protein localises to the cytoplasm. The UvrABC repair system catalyzes the recognition and processing of DNA lesions. UvrC both incises the 5' and 3' sides of the lesion. The N-terminal half is responsible for the 3' incision and the C-terminal half is responsible for the 5' incision. The protein is UvrABC system protein C of Streptococcus equi subsp. zooepidemicus (strain MGCS10565).